The sequence spans 843 residues: Histone-lysine N-methyltransferase PRDM9 (843 aa).

The region spanning 23–86 (KVKDEFKDIS…QRQAMKPQIN (64 aa)) is the KRAB-related domain. Disordered stretches follow at residues 85–104 (INDSEDSDEEWTPKQQVSPP) and 110–170 (VKHS…KKLK). The Zn(2+) site is built by Cys-205, Cys-208, Cys-216, and His-219. In terms of domain architecture, SET spans 244–358 (PGLRISPSGI…PGCELLVWYG (115 aa)). Residues 256-258 (AGL), Tyr-291, and 320-321 (NC) each bind S-adenosyl-L-methionine. 288–294 (NSGYSWL) serves as a coordination point for substrate. Tyr-357 contacts substrate. Residue Lys-368 is modified to N6,N6,N6-trimethyllysine; alternate. Residue Lys-368 is modified to N6-methyllysine; alternate. An N6-methyllysine mark is found at Lys-372 and Lys-374. The segment at 388 to 411 (HPCLLCSLAFSSQKFLTQHMEWNH) adopts a C2H2-type 1 zinc-finger fold. Zn(2+)-binding residues include Cys-390, Cys-393, His-406, and His-411. The segment at 418–493 (GTSARINPKP…VEELRTGQTT (76 aa)) is disordered. Over residues 436–454 (QEQHVDSQNKNDKASNEVK) the composition is skewed to basic and acidic residues. The span at 462 to 472 (RISTTFPSTLK) shows a compositional bias: polar residues. Positions 473-488 (EQMRSEESKRTVEELR) are enriched in basic and acidic residues. The C2H2-type 2; degenerate zinc-finger motif lies at 513–531 (QCGQYFSDKSNVNEHQKTH). C2H2-type zinc fingers lie at residues 537 to 559 (YVCRECGRGFTQNSHLIQHQRTH), 565 to 587 (YVCRECGRGFTQKSDLIKHQRTH), 593 to 615 (YVCRECGRGFTQKSDLIKHQRTH), 621 to 643 (YVCRECGRGFTQKSVLIKHQRTH), 649 to 671 (YVCRECGRGFTQKSVLIKHQRTH), 677 to 699 (YVCRECGRGFTAKSVLIQHQRTH), 705 to 727 (YVCRECGRGFTAKSNLIQHQRTH), 733 to 755 (YVCRECGRGFTAKSVLIQHQRTH), 761 to 783 (YVCRECGRGFTAKSVLIQHQRTH), 789 to 811 (YVCRECGRGFTQKSNLIKHQRTH), and 817 to 839 (YVCRECGWGFTQKSDLIQHQRTH). Zn(2+) is bound by residues Cys-707, Cys-710, His-723, His-727, Cys-735, Cys-738, His-751, His-755, Cys-763, Cys-766, His-779, His-783, Cys-791, Cys-794, His-807, and His-811. The tract at residues 715 to 805 (TAKSNLIQHQ…RGFTQKSNLI (91 aa)) is DNA-binding.

This sequence belongs to the class V-like SAM-binding methyltransferase superfamily. As to quaternary structure, homodimer. Interacts with EHMT2 and CDYL; interaction only takes place when PRDM9 is bound to hotspot DNA. Interacts with CXXC1; this interaction does not link PRDM9-activated recombination hotspot sites with DSB machinery and is not required for the hotspot recognition pathway. Forms a complex with EWSR1, REC8, SYCP3 and SYCP1; complex formation is dependent of phosphorylated form of REC8 and requires PRDM9 bound to hotspot DNA; EWSR1 joins PRDM9 with the chromosomal axis through REC8. Mono-methylated; automethylated. Tri-methylated; automethylated. Mono-methylation is predominant; automethylation is lower and slower than H3 peptide methylation and is in a highest S-adenosyl-L-methionine concentration-dependent. There are two major sites for automethylation at Lys-368 and Lys-374. Lysines can be simultaneously methylated, such as Lys-368(me3)/Lys-372(me1), Lys-368(me1)/Lys-374(me1) and Lys-368(me1)/Lys-372(me1)/Lys-374(me1). Automethylation is an intramolecular (cis) process. As to expression, specifically expressed in germ cells entering meiotic prophase in female fetal gonads and in postnatal testis. Expressed in early meiotic prophase.

The protein resides in the nucleus. The protein localises to the chromosome. It carries out the reaction L-lysyl-[protein] + S-adenosyl-L-methionine = N(6)-methyl-L-lysyl-[protein] + S-adenosyl-L-homocysteine + H(+). It catalyses the reaction N(6),N(6)-dimethyl-L-lysyl-[protein] + S-adenosyl-L-methionine = N(6),N(6),N(6)-trimethyl-L-lysyl-[protein] + S-adenosyl-L-homocysteine + H(+). The enzyme catalyses L-lysyl(4)-[histone H3] + 3 S-adenosyl-L-methionine = N(6),N(6),N(6)-trimethyl-L-lysyl(4)-[histone H3] + 3 S-adenosyl-L-homocysteine + 3 H(+). The catalysed reaction is L-lysyl(36)-[histone H3] + 3 S-adenosyl-L-methionine = N(6),N(6),N(6)-trimethyl-L-lysyl(36)-[histone H3] + 3 S-adenosyl-L-homocysteine + 3 H(+). It carries out the reaction L-lysyl(9)-[histone H3] + 3 S-adenosyl-L-methionine = N(6),N(6),N(6)-trimethyl-L-lysyl(9)-[histone H3] + 3 S-adenosyl-L-homocysteine + 3 H(+). It catalyses the reaction L-lysyl(20)-[histone H4] + S-adenosyl-L-methionine = N(6)-methyl-L-lysyl(20)-[histone H4] + S-adenosyl-L-homocysteine + H(+). The enzyme catalyses N(6)-methyl-L-lysyl(20)-[histone H4] + S-adenosyl-L-methionine = N(6),N(6)-dimethyl-L-lysyl(20)-[histone H4] + S-adenosyl-L-homocysteine + H(+). In terms of biological role, histone methyltransferase that sequentially mono-, di-, and tri-methylates both 'Lys-4' (H3K4) and 'Lys-36' (H3K36) of histone H3 to produce respectively trimethylated 'Lys-4' (H3K4me3) and trimethylated 'Lys-36' (H3K36me3) histone H3 and plays a key role in meiotic prophase by determining hotspot localization thereby promoting meiotic recombination. Can also methylate all four core histones with H3 being the best substrate and the most highly modified. Is also able, on one hand, to mono and di-methylate H4K20 and on other hand to trimethylate H3K9 with the di-methylated H3K9 as the best substrate. During meiotic prophase, binds specific DNA sequences through its zinc finger domains thereby determining hotspot localization where it promotes local H3K4me3 and H3K36me3 enrichment on the same nucleosomes through its histone methyltransferase activity. Thereby promotes double-stranded breaks (DSB) formation, at this subset of PRDM9-binding sites, that initiates meiotic recombination for the proper meiotic progression. During meiotic progression hotspot-bound PRDM9 interacts with several complexes; in early leptonema binds CDYL and EHMT2 followed by EWSR1 and CXXC1 by the end of leptonema. EWSR1 joins PRDM9 with the chromosomal axis through REC8. In this way, controls the DSB repair pathway, pairing of homologous chromosomes and sex body formation. Moreover plays a central role in the transcriptional activation of genes during early meiotic prophase thanks to H3K4me3 and H3K36me3 enrichment that represents a specific tag for epigenetic transcriptional activation. In addition performs automethylation. Acetylation and phosphorylation of histone H3 attenuate or prevent histone H3 methylation. The sequence is that of Histone-lysine N-methyltransferase PRDM9 from Mus musculus (Mouse).